Here is a 92-residue protein sequence, read N- to C-terminus: MGRSLKKGPFVDEHLMKKVEAQVNAERKSVIKTWSRRSTIFPNFVGLTIAVYDGRKHVPVYVQEDMVGHKLGEFAPTRTYRGHAADDKKTRR.

It belongs to the universal ribosomal protein uS19 family.

Protein S19 forms a complex with S13 that binds strongly to the 16S ribosomal RNA. The protein is Small ribosomal subunit protein uS19 of Lactococcus lactis subsp. lactis (strain IL1403) (Streptococcus lactis).